The chain runs to 317 residues: Petrobactin-binding protein YclQ (317 aa).

Positions 1–19 (MKKFALLFIALVTAVVISA) are cleaved as a signal peptide. Residue C20 is the site of N-palmitoyl cysteine attachment. Residue C20 is the site of S-diacylglycerol cysteine attachment. In terms of domain architecture, Fe/B12 periplasmic-binding spans 56–317 (KVVVFDFGSL…IKEVKDGLEK (262 aa)).

The protein belongs to the bacterial solute-binding protein 8 family. As to quaternary structure, the complex is composed of two ATP-binding proteins (YclP), two transmembrane proteins (YclN and YclO) and a solute-binding protein (YclQ). Interacts with FloT.

It is found in the cell membrane. The protein localises to the membrane raft. Functionally, part of the ABC transporter complex YclNOPQ involved in uptake of ferric-petrobactin. Petrobactin is a photoreactive 3,4-catecholate siderophore produced by many members of the B.cereus group, including B.anthracis. Binds selectively iron-free and ferric petrobactin and the petrobactin precursor 3,4-dihydroxybenzoic acid (3,4-DHB). The sequence is that of Petrobactin-binding protein YclQ (yclQ) from Bacillus subtilis (strain 168).